A 104-amino-acid chain; its full sequence is Protein METHYLENE BLUE SENSITIVITY 2 (104 aa).

The span at 1–11 shows a compositional bias: basic residues; that stretch reads MTGKAKPKKHT. 2 disordered regions span residues 1 to 46 and 64 to 104; these read MTGK…GHAK and IHHE…SLKK. 2 stretches are compositionally biased toward basic and acidic residues: residues 36–46 and 73–82; these read RTGKEKGGHAK and LTYEEPRNLH.

Its subcellular location is the nucleus. It localises to the cytoplasm. The protein resides in the stress granule. Required for acclimation to reactive oxygen species (ROS) responses downstream of beta-cyclocitral, including singlet oxygen 1O(2) detoxification reactions, especially upon light-mediated photooxidative stress, and leading to programmed cell death. Prevents leaf senescence. This chain is Protein METHYLENE BLUE SENSITIVITY 2, found in Arabidopsis thaliana (Mouse-ear cress).